The primary structure comprises 113 residues: MNTVRVTFLLVFVLAVSLGQADKDENRMEMQEKTEQGKSYLDFAENLLLQKLEELEAKPLEEDSEESRNSRQKRCIGEGVPCDENDPRCCSGLVCLKPTLHGIWYKSYYCYKK.

Residues 1 to 21 form the signal peptide; sequence MNTVRVTFLLVFVLAVSLGQA. Positions 22–74 are excised as a propeptide; sequence DKDENRMEMQEKTEQGKSYLDFAENLLLQKLEELEAKPLEEDSEESRNSRQKR. A compositionally biased stretch (basic and acidic residues) spans 57–69; sequence AKPLEEDSEESRN. A disordered region spans residues 57 to 83; the sequence is AKPLEEDSEESRNSRQKRCIGEGVPCD. Intrachain disulfides connect Cys75–Cys90, Cys82–Cys95, and Cys89–Cys110.

It belongs to the neurotoxin 14 (magi-1) family. 01 (HNTX-16) subfamily. In terms of tissue distribution, expressed by the venom gland.

The protein localises to the secreted. In terms of biological role, probable ion channel inhibitor. This is U11-theraphotoxin-Hhn1a from Cyriopagopus hainanus (Chinese bird spider).